The following is a 354-amino-acid chain: Ferrochelatase (354 aa).

Fe cation-binding residues include histidine 214 and glutamate 295.

This sequence belongs to the ferrochelatase family.

The protein localises to the cytoplasm. It catalyses the reaction heme b + 2 H(+) = protoporphyrin IX + Fe(2+). It functions in the pathway porphyrin-containing compound metabolism; protoheme biosynthesis; protoheme from protoporphyrin-IX: step 1/1. Its function is as follows. Catalyzes the ferrous insertion into protoporphyrin IX. The chain is Ferrochelatase from Burkholderia lata (strain ATCC 17760 / DSM 23089 / LMG 22485 / NCIMB 9086 / R18194 / 383).